The chain runs to 214 residues: Thymidylate kinase (214 aa).

Residue 7 to 14 coordinates ATP; sequence GIDGAGKS.

It belongs to the thymidylate kinase family.

It catalyses the reaction dTMP + ATP = dTDP + ADP. Functionally, phosphorylation of dTMP to form dTDP in both de novo and salvage pathways of dTTP synthesis. The protein is Thymidylate kinase of Chlorobium luteolum (strain DSM 273 / BCRC 81028 / 2530) (Pelodictyon luteolum).